We begin with the raw amino-acid sequence, 424 residues long: Tyrosine--tRNA ligase (424 aa).

Residue Tyr37 participates in L-tyrosine binding. A 'HIGH' region motif is present at residues 42-51; sequence PTADSLHLGH. 2 residues coordinate L-tyrosine: Tyr175 and Gln179. A 'KMSKS' region motif is present at residues 235 to 239; sequence KFGKT. Lys238 is a binding site for ATP. Residues 357–414 form the S4 RNA-binding domain; sequence ADLQQALVNAELVPSRGQARTMIGSNAVAINGEKQADPEYVFTDADRLFGRYTLLRRG.

The protein belongs to the class-I aminoacyl-tRNA synthetase family. TyrS type 1 subfamily. As to quaternary structure, homodimer.

The protein localises to the cytoplasm. The catalysed reaction is tRNA(Tyr) + L-tyrosine + ATP = L-tyrosyl-tRNA(Tyr) + AMP + diphosphate + H(+). Catalyzes the attachment of tyrosine to tRNA(Tyr) in a two-step reaction: tyrosine is first activated by ATP to form Tyr-AMP and then transferred to the acceptor end of tRNA(Tyr). In Yersinia pseudotuberculosis serotype O:1b (strain IP 31758), this protein is Tyrosine--tRNA ligase.